The chain runs to 216 residues: Uracil phosphoribosyltransferase (216 aa).

Residues R84, R109, and 137–145 (DPMLATGGS) contribute to the 5-phospho-alpha-D-ribose 1-diphosphate site. Residues I202 and 207 to 209 (GDA) contribute to the uracil site. D208 serves as a coordination point for 5-phospho-alpha-D-ribose 1-diphosphate.

The protein belongs to the UPRTase family. Requires Mg(2+) as cofactor.

The enzyme catalyses UMP + diphosphate = 5-phospho-alpha-D-ribose 1-diphosphate + uracil. The protein operates within pyrimidine metabolism; UMP biosynthesis via salvage pathway; UMP from uracil: step 1/1. Allosterically activated by GTP. Catalyzes the conversion of uracil and 5-phospho-alpha-D-ribose 1-diphosphate (PRPP) to UMP and diphosphate. The protein is Uracil phosphoribosyltransferase of Nostoc sp. (strain PCC 7120 / SAG 25.82 / UTEX 2576).